The chain runs to 285 residues: Shikimate dehydrogenase (NADP(+)) (285 aa).

Residues 20-22 (SLS) and Thr67 contribute to the shikimate site. Lys71 serves as the catalytic Proton acceptor. Position 83 (Glu83) interacts with NADP(+). Residues Asn92 and Asp107 each coordinate shikimate. NADP(+)-binding positions include 132–136 (GAGGA) and Leu230. Tyr232 provides a ligand contact to shikimate. Gly253 serves as a coordination point for NADP(+).

The protein belongs to the shikimate dehydrogenase family. In terms of assembly, homodimer.

It carries out the reaction shikimate + NADP(+) = 3-dehydroshikimate + NADPH + H(+). Its pathway is metabolic intermediate biosynthesis; chorismate biosynthesis; chorismate from D-erythrose 4-phosphate and phosphoenolpyruvate: step 4/7. Involved in the biosynthesis of the chorismate, which leads to the biosynthesis of aromatic amino acids. Catalyzes the reversible NADPH linked reduction of 3-dehydroshikimate (DHSA) to yield shikimate (SA). This Salinibacter ruber (strain DSM 13855 / M31) protein is Shikimate dehydrogenase (NADP(+)).